A 286-amino-acid polypeptide reads, in one-letter code: Flagellin FlaB2 (286 aa).

The protein belongs to the bacterial flagellin family. As to quaternary structure, the flagellum consists of an outer layer composed of repeating units of FlaA around a core that contains several antigenically related polypeptides. Interacts with FliW; a synthetic peptide of FlaB1 (residues 229-247) partially blocks binding of this protein to FliW.

The protein resides in the periplasmic flagellum. Its subcellular location is the periplasm. Functionally, component of the core of the flagella. This Treponema pallidum (strain Nichols) protein is Flagellin FlaB2.